The sequence spans 493 residues: Glutamyl-tRNA(Gln) amidotransferase subunit A (493 aa).

Residues Lys-81 and Ser-156 each act as charge relay system in the active site. Catalysis depends on Ser-180, which acts as the Acyl-ester intermediate.

This sequence belongs to the amidase family. GatA subfamily. Heterotrimer of A, B and C subunits.

It carries out the reaction L-glutamyl-tRNA(Gln) + L-glutamine + ATP + H2O = L-glutaminyl-tRNA(Gln) + L-glutamate + ADP + phosphate + H(+). Its function is as follows. Allows the formation of correctly charged Gln-tRNA(Gln) through the transamidation of misacylated Glu-tRNA(Gln) in organisms which lack glutaminyl-tRNA synthetase. The reaction takes place in the presence of glutamine and ATP through an activated gamma-phospho-Glu-tRNA(Gln). The protein is Glutamyl-tRNA(Gln) amidotransferase subunit A of Mycobacterium avium (strain 104).